Consider the following 135-residue polypeptide: Cytochrome c2 (135 aa).

An N-terminal signal peptide occupies residues 1 to 23 (MKKGFLAAGVFAAVAFASGAALA). Positions 37, 40, 41, and 114 each coordinate heme c.

The protein belongs to the cytochrome c family. In terms of processing, binds 1 heme c group covalently per subunit.

Functionally, cytochrome c2 is found mainly in purple, non-sulfur, photosynthetic bacteria where it functions as the electron donor to the oxidized bacteriochlorophyll in the photophosphorylation pathway. However, it may also have a role in the respiratory chain and is found in some non-photosynthetic bacteria. In Rhodospirillum rubrum (strain ATCC 11170 / ATH 1.1.1 / DSM 467 / LMG 4362 / NCIMB 8255 / S1), this protein is Cytochrome c2 (cycA).